We begin with the raw amino-acid sequence, 314 residues long: ATP synthase gamma chain (314 aa).

The protein belongs to the ATPase gamma chain family. As to quaternary structure, F-type ATPases have 2 components, CF(1) - the catalytic core - and CF(0) - the membrane proton channel. CF(1) has five subunits: alpha(3), beta(3), gamma(1), delta(1), epsilon(1). CF(0) has three main subunits: a, b and c.

It localises to the cell inner membrane. In terms of biological role, produces ATP from ADP in the presence of a proton gradient across the membrane. The gamma chain is believed to be important in regulating ATPase activity and the flow of protons through the CF(0) complex. The chain is ATP synthase gamma chain from Gloeobacter violaceus (strain ATCC 29082 / PCC 7421).